Here is a 286-residue protein sequence, read N- to C-terminus: Eukaryotic translation initiation factor 3 subunit J (286 aa).

Disordered regions lie at residues 1–35, 141–162, and 229–258; these read MSWDDEDFDIPSNSKQAAASWEEEGNDEPLLDSWD, AASGPTPARLTKDTPIDTHPLF, and KAERQARLKKAGGTATGGAGKKKAKPAVKT. Residues 21–35 are compositionally biased toward acidic residues; it reads WEEEGNDEPLLDSWD. Residues 35–75 adopt a coiled-coil conformation; that stretch reads DIDEEEVARKKKEEEAKKKAEKEALKKKQEESKAKKLSKNK.

The protein belongs to the eIF-3 subunit J family. Component of the eukaryotic translation initiation factor 3 (eIF-3) complex.

The protein localises to the cytoplasm. In terms of biological role, component of the eukaryotic translation initiation factor 3 (eIF-3) complex, which is involved in protein synthesis of a specialized repertoire of mRNAs and, together with other initiation factors, stimulates binding of mRNA and methionyl-tRNAi to the 40S ribosome. The eIF-3 complex specifically targets and initiates translation of a subset of mRNAs involved in cell proliferation. The protein is Eukaryotic translation initiation factor 3 subunit J of Debaryomyces hansenii (strain ATCC 36239 / CBS 767 / BCRC 21394 / JCM 1990 / NBRC 0083 / IGC 2968) (Yeast).